Consider the following 427-residue polypeptide: TNF receptor-associated factor family protein DDB_G0285149 (427 aa).

The segment at 20–65 (CIVCTDLLSESHDKIQVNQCPHGHCLCSDCWTKQIENKKKECPICR) adopts an RING-type zinc-finger fold. TRAF-type zinc fingers lie at residues 122-178 (THFK…INKD) and 178-234 (DHLE…KHQA). Positions 284–415 (KYSNQWVIEN…GNKLTIKFEI (132 aa)) constitute an MATH domain.

Belongs to the TNF receptor-associated factor family. A subfamily.

Its subcellular location is the cytoplasm. Functionally, probable adapter protein and signal transducer that links members of the tumor necrosis factor receptor family to different signaling pathways by association with the receptor cytoplasmic domain and kinases. This is TNF receptor-associated factor family protein DDB_G0285149 from Dictyostelium discoideum (Social amoeba).